A 351-amino-acid polypeptide reads, in one-letter code: SH3 domain-containing protein 3 (351 aa).

Coiled-coil stretches lie at residues 1 to 21 (MDAF…QQLA) and 193 to 213 (LQLA…LGKE). Positions 31-267 (YESSDVMVID…MVTEKQHKES (237 aa)) constitute a BAR domain. An SH3 domain is found at 281–340 (TSYFLAEVIHPFSAASEKELDLDKGDYIVVRKVSQTGWAEGECKGKAGWFPMAYIEKRQR).

Interacts with FREE1. Interacts (via SH3 domain) with DRP2A/ADL6. Binds to SH3P2. As to expression, detected in all tissues except seedlings.

The protein localises to the cytoplasmic vesicle. The protein resides in the clathrin-coated vesicle. May be involved in the recruitment of DRP2A to the accessory protein complex and in the negative regulation of its GTPase activity. This Arabidopsis thaliana (Mouse-ear cress) protein is SH3 domain-containing protein 3.